Reading from the N-terminus, the 535-residue chain is Flavin-containing monooxygenase 2 (535 aa).

Ala-2 carries the post-translational modification N-acetylalanine. FAD is bound by residues 9-13 (GAGVS), Glu-32, 40-41 (VW), and 61-62 (NT). NADP(+) is bound by residues 60–61 (TN) and 195–198 (SGSD). Residue Lys-492 forms a Glycyl lysine isopeptide (Lys-Gly) (interchain with G-Cter in SUMO) linkage. A helical transmembrane segment spans residues 510-530 (FSVSFLLKILGLLAVVVAFFC).

Belongs to the FMO family. It depends on FAD as a cofactor. Requires Mg(2+) as cofactor. In terms of tissue distribution, expressed in lung (at protein level). Expressed predominantly in lung, and at a much lesser extent in kidney. Also expressed in fetal lung, but not in liver, kidney and brain.

The protein localises to the microsome membrane. The protein resides in the endoplasmic reticulum membrane. Its function is as follows. Catalyzes the oxidative metabolism of numerous xenobiotics, including mainly therapeutic drugs and insecticides that contain a soft nucleophile, most commonly nitrogen and sulfur and participates to their bioactivation. Specifically catalyzes S-oxygenation of sulfur derived compounds such as thioureas-derived compounds, thioetherorganophosphates to their sulfenic acid. In vitro, catalyzes S-oxygenation of the second-line antitubercular drugs thiacetazone (TAZ) and ethionamide (ETA), forming a sulfinic acid and a carbodiimide via a postulated sulfenic acid intermediate. Also catalyzes S-oxygenation of the thioether-containing organophosphate insecticides, phorate and disulfoton. The sequence is that of Flavin-containing monooxygenase 2 from Homo sapiens (Human).